The primary structure comprises 862 residues: Probable linoleate 9S-lipoxygenase 5 (862 aa).

A PLAT domain is found at 36–161; it reads NDVNASLLDG…KYKSERIFFA (126 aa). A Lipoxygenase domain is found at 164–862; it reads AYLPGETPEP…GKGIPNSVSI (699 aa). Fe cation-binding residues include histidine 523, histidine 528, histidine 714, asparagine 718, and isoleucine 862.

Belongs to the lipoxygenase family. In terms of assembly, monomer. The cofactor is Fe cation. In terms of tissue distribution, not detected in leaves, stems, flowers, roots, tubers and stolons during normal growth and development.

It localises to the cytoplasm. The catalysed reaction is (9Z,12Z)-octadecadienoate + O2 = (9S)-hydroperoxy-(10E,12Z)-octadecadienoate. Its pathway is lipid metabolism; oxylipin biosynthesis. Functionally, plant lipoxygenases may be involved in a number of diverse aspects of plant physiology including growth and development, pest resistance, and senescence or responses to wounding. May contribute to cell death during the hypersensitive response (HR) by the massive production of free fatty acid hydroperoxides. Catalyzes the hydroperoxidation of lipids containing a cis,cis-1,4-pentadiene structure. This chain is Probable linoleate 9S-lipoxygenase 5 (LOX1.5), found in Solanum tuberosum (Potato).